The primary structure comprises 419 residues: UDP-N-acetylglucosamine 1-carboxyvinyltransferase (419 aa).

Position 22–23 (22–23) interacts with phosphoenolpyruvate; that stretch reads KN. R93 contacts UDP-N-acetyl-alpha-D-glucosamine. C117 acts as the Proton donor in catalysis. Position 117 is a 2-(S-cysteinyl)pyruvic acid O-phosphothioketal (C117). UDP-N-acetyl-alpha-D-glucosamine is bound by residues D307 and I329.

The protein belongs to the EPSP synthase family. MurA subfamily.

Its subcellular location is the cytoplasm. The enzyme catalyses phosphoenolpyruvate + UDP-N-acetyl-alpha-D-glucosamine = UDP-N-acetyl-3-O-(1-carboxyvinyl)-alpha-D-glucosamine + phosphate. Its pathway is cell wall biogenesis; peptidoglycan biosynthesis. In terms of biological role, cell wall formation. Adds enolpyruvyl to UDP-N-acetylglucosamine. In Shewanella baltica (strain OS195), this protein is UDP-N-acetylglucosamine 1-carboxyvinyltransferase.